Here is a 513-residue protein sequence, read N- to C-terminus: Coniferin beta-glucosidase (513 aa).

An N-terminal signal peptide occupies residues Met-1–Ala-23. Residues Gln-44, His-145, and Asn-190–Glu-191 each bind a beta-D-glucoside. Glu-191 acts as the Proton donor in catalysis. Cys-210 and Cys-219 are joined by a disulfide. N-linked (GlcNAc...) asparagine glycosylation is present at Asn-223. Positions 336 and 408 each coordinate a beta-D-glucoside. Glu-408 functions as the Nucleophile in the catalytic mechanism. A glycan (N-linked (GlcNAc...) asparagine) is linked at Asn-447. Residues Trp-457, Glu-464 to Trp-465, and Phe-473 contribute to the a beta-D-glucoside site.

Belongs to the glycosyl hydrolase 1 family. In terms of assembly, homodimer. In terms of processing, glycosylated.

The enzyme catalyses 4-O-(beta-D-glucosyl)-(E)-coniferol + H2O = (E)-coniferol + D-glucose. Its activity is regulated as follows. Inhibited by glucono-1,5-lactone, but not by bromoconduritol or conduritol B epoxide. In terms of biological role, involved in the release of monolignols for lignin biosynthesis. Unable to hydrolyze 4-nitrophenyl beta-cellobioside or alpha-linked methylumbelliferyl glucoside. The polypeptide is Coniferin beta-glucosidase (Pinus contorta (Shore pine)).